A 157-amino-acid chain; its full sequence is Endoribonuclease YbeY (157 aa).

Zn(2+)-binding residues include histidine 112, histidine 116, and histidine 122.

Belongs to the endoribonuclease YbeY family. Zn(2+) is required as a cofactor.

The protein resides in the cytoplasm. Single strand-specific metallo-endoribonuclease involved in late-stage 70S ribosome quality control and in maturation of the 3' terminus of the 16S rRNA. This Marinobacter nauticus (strain ATCC 700491 / DSM 11845 / VT8) (Marinobacter aquaeolei) protein is Endoribonuclease YbeY.